A 171-amino-acid polypeptide reads, in one-letter code: Endoribonuclease YbeY (171 aa).

Positions 126, 130, and 136 each coordinate Zn(2+).

Belongs to the endoribonuclease YbeY family. Zn(2+) serves as cofactor.

It localises to the cytoplasm. In terms of biological role, single strand-specific metallo-endoribonuclease involved in late-stage 70S ribosome quality control and in maturation of the 3' terminus of the 16S rRNA. The chain is Endoribonuclease YbeY from Rhizobium etli (strain ATCC 51251 / DSM 11541 / JCM 21823 / NBRC 15573 / CFN 42).